A 213-amino-acid chain; its full sequence is Outer-membrane lipoprotein carrier protein (213 aa).

The first 23 residues, 1–23, serve as a signal peptide directing secretion; the sequence is MKKLLKQSLLGFALVSMTGAAFA.

This sequence belongs to the LolA family. In terms of assembly, monomer.

The protein resides in the periplasm. Its function is as follows. Participates in the translocation of lipoproteins from the inner membrane to the outer membrane. Only forms a complex with a lipoprotein if the residue after the N-terminal Cys is not an aspartate (The Asp acts as a targeting signal to indicate that the lipoprotein should stay in the inner membrane). The chain is Outer-membrane lipoprotein carrier protein from Actinobacillus pleuropneumoniae serotype 3 (strain JL03).